The primary structure comprises 90 residues: Small ribosomal subunit protein bS18 (90 aa).

This sequence belongs to the bacterial ribosomal protein bS18 family. Part of the 30S ribosomal subunit. Forms a tight heterodimer with protein bS6.

Functionally, binds as a heterodimer with protein bS6 to the central domain of the 16S rRNA, where it helps stabilize the platform of the 30S subunit. This chain is Small ribosomal subunit protein bS18, found in Bordetella petrii (strain ATCC BAA-461 / DSM 12804 / CCUG 43448).